A 153-amino-acid chain; its full sequence is Arachidonate 5-lipoxygenase-activating protein (153 aa).

At 1–8 (MDQEAVGN) the chain is on the lumenal side. The chain crosses the membrane as a helical span at residues 9-30 (VVLLAIVTLISVVQNGFFAHKV). Residues 31-52 (EHESRNQNGRSFQRTGTLAFER) are Cytoplasmic-facing. A helical transmembrane segment spans residues 53-77 (VYTANQNCVDAYPTFLAVLWTAGLL). The Lumenal portion of the chain corresponds to 78–80 (CSQ). Residues 81 to 102 (VPAAFAGLMYLFVRQKYFVGYL) form a helical membrane-spanning segment. Over 103–107 (GERTQ) the chain is Cytoplasmic. Residues 108 to 115 (STPGYIFG) lie within the membrane without spanning it. The helical transmembrane segment at 116–128 (KRIILFLFLMSLA) threads the bilayer. Over 129 to 153 (GILNYCLILLFGSDFENYIKTISTT) the chain is Lumenal.

The protein belongs to the MAPEG family. As to quaternary structure, homotrimer. Interacts with LTC4S and ALOX5.

It is found in the nucleus membrane. The protein localises to the endoplasmic reticulum membrane. In terms of biological role, required for leukotriene biosynthesis by ALOX5 (5-lipoxygenase). Anchors ALOX5 to the membrane. Binds arachidonic acid, and could play an essential role in the transfer of arachidonic acid to ALOX5. Binds to MK-886, a compound that blocks the biosynthesis of leukotrienes. This is Arachidonate 5-lipoxygenase-activating protein (ALOX5AP) from Oryctolagus cuniculus (Rabbit).